A 275-amino-acid chain; its full sequence is Large ribosomal subunit protein uL2 (275 aa).

Disordered stretches follow at residues 1 to 24 and 208 to 275; these read MGIR…FSEI and AGRT…RRRR. Over residues 12 to 22 the composition is skewed to polar residues; that stretch reads GTRQATVSDFS. Composition is skewed to basic residues over residues 208–219 and 255–275; these read AGRTRHLGRRPQ and LGKK…RRRR.

This sequence belongs to the universal ribosomal protein uL2 family. Part of the 50S ribosomal subunit. Forms a bridge to the 30S subunit in the 70S ribosome.

Its function is as follows. One of the primary rRNA binding proteins. Required for association of the 30S and 50S subunits to form the 70S ribosome, for tRNA binding and peptide bond formation. It has been suggested to have peptidyltransferase activity; this is somewhat controversial. Makes several contacts with the 16S rRNA in the 70S ribosome. This chain is Large ribosomal subunit protein uL2, found in Picosynechococcus sp. (strain ATCC 27264 / PCC 7002 / PR-6) (Agmenellum quadruplicatum).